Reading from the N-terminus, the 547-residue chain is Glucose-6-phosphate isomerase (547 aa).

The Proton donor role is filled by glutamate 354. Catalysis depends on residues histidine 385 and lysine 513.

This sequence belongs to the GPI family.

It localises to the cytoplasm. The catalysed reaction is alpha-D-glucose 6-phosphate = beta-D-fructose 6-phosphate. The protein operates within carbohydrate biosynthesis; gluconeogenesis. It participates in carbohydrate degradation; glycolysis; D-glyceraldehyde 3-phosphate and glycerone phosphate from D-glucose: step 2/4. Catalyzes the reversible isomerization of glucose-6-phosphate to fructose-6-phosphate. The chain is Glucose-6-phosphate isomerase from Endomicrobium trichonymphae.